The chain runs to 614 residues: Probable glutamate--tRNA ligase, cytoplasmic (614 aa).

Residue arginine 130–alanine 132 coordinates L-glutamate. The 'HIGH' region motif lies at proline 135–leucine 144. Histidine 140 provides a ligand contact to ATP. L-glutamate is bound by residues aspartate 166, tyrosine 303–cysteine 307, and arginine 321. Residues glutamate 324 and valine 359–arginine 363 contribute to the ATP site. The 'KMSKS' region motif lies at valine 359–arginine 363.

The protein belongs to the class-I aminoacyl-tRNA synthetase family. Glutamate--tRNA ligase type 2 subfamily.

The protein localises to the cytoplasm. It carries out the reaction tRNA(Glu) + L-glutamate + ATP = L-glutamyl-tRNA(Glu) + AMP + diphosphate. The polypeptide is Probable glutamate--tRNA ligase, cytoplasmic (Vairimorpha ceranae (strain BRL01) (Microsporidian parasite)).